The following is a 373-amino-acid chain: Enoyl-[acyl-carrier-protein] reductase, mitochondrial (373 aa).

Residues 1–53 (MWVCGALCRTRAPAQLGQRLLPESRRRRPASASFSASAEPSRVRALVYGHHGD) constitute a mitochondrion transit peptide. Lysine 61 bears the N6-acetyllysine; alternate mark. The residue at position 61 (lysine 61) is an N6-succinyllysine; alternate. Tyrosine 94 (proton donor) is an active-site residue. Residues asparagine 167, 193–196 (NSGV), and 216–218 (RDT) each bind NADP(+). Lysine 252 and lysine 267 each carry N6-acetyllysine; alternate. Residues lysine 252 and lysine 267 each carry the N6-succinyllysine; alternate modification. NADP(+) is bound by residues 285–288 (YGGM) and 310–312 (FWL). The residue at position 316 (lysine 316) is an N6-succinyllysine. Lysine 368 contributes to the NADP(+) binding site.

Belongs to the zinc-containing alcohol dehydrogenase family. Quinone oxidoreductase subfamily. Homodimer.

It localises to the mitochondrion. It catalyses the reaction a 2,3-saturated acyl-[ACP] + NADP(+) = a (2E)-enoyl-[ACP] + NADPH + H(+). The catalysed reaction is (2E)-butenoyl-[ACP] + NADPH + H(+) = butanoyl-[ACP] + NADP(+). It carries out the reaction (2E)-hexenoyl-[ACP] + NADPH + H(+) = hexanoyl-[ACP] + NADP(+). The enzyme catalyses (2E)-octenoyl-[ACP] + NADPH + H(+) = octanoyl-[ACP] + NADP(+). It catalyses the reaction (2E)-decenoyl-[ACP] + NADPH + H(+) = decanoyl-[ACP] + NADP(+). The catalysed reaction is (2E)-dodecenoyl-[ACP] + NADPH + H(+) = dodecanoyl-[ACP] + NADP(+). It carries out the reaction (2E)-tetradecenoyl-[ACP] + NADPH + H(+) = tetradecanoyl-[ACP] + NADP(+). The enzyme catalyses (2E)-hexadecenoyl-[ACP] + NADPH + H(+) = hexadecanoyl-[ACP] + NADP(+). Its function is as follows. Catalyzes the NADPH-dependent reduction of trans-2-enoyl thioesters in mitochondrial fatty acid synthesis (fatty acid synthesis type II). Fatty acid chain elongation in mitochondria uses acyl carrier protein (ACP) as an acyl group carrier, but the enzyme accepts both ACP and CoA thioesters as substrates in vitro. Displays a preference for medium-chain over short- and long-chain substrates. May provide the octanoyl chain used for lipoic acid biosynthesis, regulating protein lipoylation and mitochondrial respiratory activity particularly in Purkinje cells. Involved in iron homeostasis; affecting Fe-S cluster assembly and ceramide metabolism. Required for proper morphology and bioenergetic functions of mitochondria. Required for maintenance of neurons. In Bos taurus (Bovine), this protein is Enoyl-[acyl-carrier-protein] reductase, mitochondrial (MECR).